The following is a 105-amino-acid chain: Small ribosomal subunit protein uS10 (105 aa).

Belongs to the universal ribosomal protein uS10 family. Part of the 30S ribosomal subunit.

Involved in the binding of tRNA to the ribosomes. The chain is Small ribosomal subunit protein uS10 from Solidesulfovibrio magneticus (strain ATCC 700980 / DSM 13731 / RS-1) (Desulfovibrio magneticus).